The chain runs to 515 residues: Penton protein (515 aa).

Positions 1-25 are disordered; that stretch reads MYRSLRPPTSIPPPPPSGPSPYPAM. Pro residues predominate over residues 9 to 22; that stretch reads TSIPPPPPSGPSPY.

Belongs to the adenoviridae penton family. Interacts with the fiber protein (via N-terminal tail region). Interacts with the capsid vertex protein; this interaction binds the penton base to neighboring peripentonal hexons.

It localises to the virion. It is found in the host nucleus. Functionally, major capsid protein that self-associates to form penton base pentamers, each in the shape of a pentagon, situated at the 12 vertices of the pseudo T=25 capsid. Involved in virus secondary attachment to host cell after initial attachment by the fiber protein, and in endocytosis of virions. As the virus enters the host cell, penton proteins are shed concomitant with virion acidification in the endosome. This Galliformes (FAdV-1) protein is Penton protein.